A 654-amino-acid polypeptide reads, in one-letter code: Glycogen debranching enzyme (654 aa).

The active-site Nucleophile is the Asp336. Glu371 functions as the Proton donor in the catalytic mechanism. Residues 459-484 (EANGEENRDGTNSNYSDNHGKEGLGG) form a disordered region.

The protein belongs to the glycosyl hydrolase 13 family.

The catalysed reaction is Hydrolysis of (1-&gt;6)-alpha-D-glucosidic linkages to branches with degrees of polymerization of three or four glucose residues in limit dextrin.. It participates in glycan degradation; glycogen degradation. In terms of biological role, removes maltotriose and maltotetraose chains that are attached by 1,6-alpha-linkage to the limit dextrin main chain, generating a debranched limit dextrin. This Salmonella typhi protein is Glycogen debranching enzyme.